Consider the following 446-residue polypeptide: Deoxyguanosinetriphosphate triphosphohydrolase-like protein (446 aa).

Residues 1–28 (MSSSVWQERRHGEDKQRRNDHRSPFQRD) form a disordered region. The segment covering 7 to 28 (QERRHGEDKQRRNDHRSPFQRD) has biased composition (basic and acidic residues). Positions 59 to 252 (RLTHSLEVSQ…MELADDIAYA (194 aa)) constitute an HD domain.

The protein belongs to the dGTPase family. Type 2 subfamily.

This is Deoxyguanosinetriphosphate triphosphohydrolase-like protein from Shewanella sp. (strain MR-4).